Reading from the N-terminus, the 205-residue chain is Probable GTP-binding protein EngB (205 aa).

In terms of domain architecture, EngB-type G spans 22 to 198 (HLPEYAFIGR…LSYIDEVNQD (177 aa)). Residues 30 to 37 (GRSNVGKS), 57 to 61 (GKTQL), 75 to 78 (DLPG), 142 to 145 (TKAD), and 177 to 179 (TSA) contribute to the GTP site. Mg(2+) is bound by residues Ser-37 and Thr-59.

It belongs to the TRAFAC class TrmE-Era-EngA-EngB-Septin-like GTPase superfamily. EngB GTPase family. Requires Mg(2+) as cofactor.

In terms of biological role, necessary for normal cell division and for the maintenance of normal septation. This chain is Probable GTP-binding protein EngB, found in Flavobacterium psychrophilum (strain ATCC 49511 / DSM 21280 / CIP 103535 / JIP02/86).